The primary structure comprises 99 residues: Spore coat protein F-like protein YraD (99 aa).

Belongs to the CotF family.

The protein localises to the spore coat. The chain is Spore coat protein F-like protein YraD (yraD) from Bacillus subtilis (strain 168).